Reading from the N-terminus, the 520-residue chain is Zinc finger and BTB domain-containing protein 18 (520 aa).

One can recognise a BTB domain in the interval 24–91; the sequence is CDCTVLVGDA…MYEGILQFKG (68 aa). Residues 121 to 140 form a disordered region; the sequence is ATTDSTKKEEDTSSFSDKVE. 4 consecutive C2H2-type zinc fingers follow at residues 368–390, 408–430, 436–458, and 464–487; these read FMCPLCNKVFPSPHILQIHLSTH, PTCSLCGKTFSCMYTLKRHERTH, YTCTQCGKSFQYSHNLSRHAVVH, and HACKWCERRFTQSGDLYRHIRKFH.

This sequence belongs to the krueppel C2H2-type zinc-finger protein family. ZBTB18 subfamily.

The protein resides in the nucleus. Transcriptional repressor that plays a role in various developmental processes. Specifically binds the consensus DNA sequence 5'-[AC]ACATCTG[GT][AC]-3' which contains the E box core, and acts by recruiting chromatin remodeling multiprotein complexes. This chain is Zinc finger and BTB domain-containing protein 18 (zbtb18), found in Xenopus laevis (African clawed frog).